The primary structure comprises 115 residues: Hydrogenase maturation factor HypA (115 aa).

H2 contacts Ni(2+). Positions 73, 76, 89, and 92 each coordinate Zn(2+).

The protein belongs to the HypA/HybF family.

In terms of biological role, involved in the maturation of [NiFe] hydrogenases. Required for nickel insertion into the metal center of the hydrogenase. This is Hydrogenase maturation factor HypA from Shewanella halifaxensis (strain HAW-EB4).